The following is a 141-amino-acid chain: HTH-type transcriptional repressor NsrR (141 aa).

The 128-residue stretch at 2–129 (QLTSFTDYGL…DNYTLADLVE (128 aa)) folds into the HTH rrf2-type domain. The segment at residues 28 to 51 (ISQVTEVYGVSRNHMVKIINQLSR) is a DNA-binding region (H-T-H motif). Positions 91, 96, and 102 each coordinate [2Fe-2S] cluster.

[2Fe-2S] cluster is required as a cofactor.

Functionally, nitric oxide-sensitive repressor of genes involved in protecting the cell against nitrosative stress. May require iron for activity. The polypeptide is HTH-type transcriptional repressor NsrR (Enterobacter sp. (strain 638)).